We begin with the raw amino-acid sequence, 446 residues long: Glutamine synthetase (446 aa).

The GS beta-grasp domain maps to 18–103; that stretch reads ENVRYLRLQF…LICDVYKTDG (86 aa). In terms of domain architecture, GS catalytic spans 110-446; the sequence is PRANLKRVLK…WERDQYMKQY (337 aa). Residues Glu-134 and Glu-136 each coordinate Mg(2+). Glu-186 is a binding site for ATP. Glu-191 and Glu-198 together coordinate Mg(2+). L-glutamate is bound by residues 242-243 and Gly-243; that span reads NG. His-247 lines the Mg(2+) pocket. Ser-251 contributes to the ATP binding site. Residues Arg-300, Glu-306, and Arg-318 each coordinate L-glutamate. Residues Arg-318 and Arg-323 each contribute to the ATP site. Glu-335 is a binding site for Mg(2+). Arg-337 provides a ligand contact to L-glutamate.

It belongs to the glutamine synthetase family. Oligomer of 12 subunits arranged in the form of two hexagons. In its feedback-inhibited form, interacts with TnrA in order to block its DNA-binding activity. Requires Mg(2+) as cofactor.

The protein resides in the cytoplasm. The enzyme catalyses L-glutamate + NH4(+) + ATP = L-glutamine + ADP + phosphate + H(+). With respect to regulation, inhibited by glutamine. Its function is as follows. Glutamine synthetase (GS) is an unusual multitasking protein that functions as an enzyme, a transcription coregulator, and a chaperone in ammonium assimilation and in the regulation of genes involved in nitrogen metabolism. It catalyzes the ATP-dependent biosynthesis of glutamine from glutamate and ammonia. Feedback-inhibited GlnA also interacts with and regulates the activity of the transcriptional regulator TnrA. During nitrogen limitation, TnrA is in its DNA-binding active state and turns on the transcription of genes required for nitrogen assimilation. Under conditions of nitrogen excess, feedback-inhibited GlnA forms a stable complex with TnrA, which inhibits its DNA-binding activity. In contrast, feedback-inhibited GlnA acts as a chaperone to stabilize the DNA-binding activity of GlnR, which represses the transcription of nitrogen assimilation genes. This is Glutamine synthetase from Staphylococcus aureus (strain MSSA476).